The following is a 155-amino-acid chain: Regulatory protein RecX (155 aa).

The protein belongs to the RecX family.

The protein localises to the cytoplasm. Modulates RecA activity. The protein is Regulatory protein RecX of Vibrio campbellii (strain ATCC BAA-1116).